A 279-amino-acid polypeptide reads, in one-letter code: Aspartate/glutamate leucyltransferase (279 aa).

Residues 245 to 279 are disordered; it reads ARERGARPPRGPGALKDACDLPLSDAQPADIEDLD.

It belongs to the R-transferase family. Bpt subfamily.

The protein localises to the cytoplasm. The enzyme catalyses N-terminal L-glutamyl-[protein] + L-leucyl-tRNA(Leu) = N-terminal L-leucyl-L-glutamyl-[protein] + tRNA(Leu) + H(+). The catalysed reaction is N-terminal L-aspartyl-[protein] + L-leucyl-tRNA(Leu) = N-terminal L-leucyl-L-aspartyl-[protein] + tRNA(Leu) + H(+). Functionally, functions in the N-end rule pathway of protein degradation where it conjugates Leu from its aminoacyl-tRNA to the N-termini of proteins containing an N-terminal aspartate or glutamate. This chain is Aspartate/glutamate leucyltransferase, found in Caulobacter vibrioides (strain ATCC 19089 / CIP 103742 / CB 15) (Caulobacter crescentus).